A 186-amino-acid polypeptide reads, in one-letter code: Elongation factor P (186 aa).

Belongs to the elongation factor P family.

The protein resides in the cytoplasm. It participates in protein biosynthesis; polypeptide chain elongation. Involved in peptide bond synthesis. Stimulates efficient translation and peptide-bond synthesis on native or reconstituted 70S ribosomes in vitro. Probably functions indirectly by altering the affinity of the ribosome for aminoacyl-tRNA, thus increasing their reactivity as acceptors for peptidyl transferase. This is Elongation factor P from Acidobacterium capsulatum (strain ATCC 51196 / DSM 11244 / BCRC 80197 / JCM 7670 / NBRC 15755 / NCIMB 13165 / 161).